We begin with the raw amino-acid sequence, 365 residues long: Flagellin 1 (365 aa).

It belongs to the bacterial flagellin family.

The protein localises to the secreted. It is found in the bacterial flagellum. Flagellin is the subunit protein which polymerizes to form the filaments of bacterial flagella. The sequence is that of Flagellin 1 (fliC1) from Proteus mirabilis.